Consider the following 184-residue polypeptide: Adenylate kinase (184 aa).

12 to 17 (GAGKGT) is a binding site for ATP. Residues 32–61 (STGELLRKEIDLDTDLGKQVKDIMNRGELV) form an NMP region. AMP is bound by residues Thr33, Arg38, 59-61 (ELV), 85-88 (GYPR), and Gln92. The interval 126-132 (IRGRKDD) is LID. Residue Arg127 participates in ATP binding. Residues Arg129 and Arg140 each contribute to the AMP site. ATP is bound at residue Gly168.

Belongs to the adenylate kinase family. As to quaternary structure, monomer.

The protein resides in the cytoplasm. It carries out the reaction AMP + ATP = 2 ADP. The protein operates within purine metabolism; AMP biosynthesis via salvage pathway; AMP from ADP: step 1/1. Catalyzes the reversible transfer of the terminal phosphate group between ATP and AMP. Plays an important role in cellular energy homeostasis and in adenine nucleotide metabolism. In Prochlorococcus marinus subsp. pastoris (strain CCMP1986 / NIES-2087 / MED4), this protein is Adenylate kinase.